A 245-amino-acid polypeptide reads, in one-letter code: Uridylate kinase (245 aa).

Residue 12 to 15 (KLSG) coordinates ATP. Positions 20–25 (GERGVG) are involved in allosteric activation by GTP. Position 54 (G54) interacts with UMP. 2 residues coordinate ATP: G55 and R59. Residues D74 and 135–142 (IGSPYFST) each bind UMP. The ATP site is built by N163, Y169, and D172.

The protein belongs to the UMP kinase family. In terms of assembly, homohexamer.

It is found in the cytoplasm. It carries out the reaction UMP + ATP = UDP + ADP. The protein operates within pyrimidine metabolism; CTP biosynthesis via de novo pathway; UDP from UMP (UMPK route): step 1/1. Its activity is regulated as follows. Allosterically activated by GTP. Inhibited by UTP. Functionally, catalyzes the reversible phosphorylation of UMP to UDP. The sequence is that of Uridylate kinase from Streptococcus pneumoniae serotype 2 (strain D39 / NCTC 7466).